The chain runs to 458 residues: UDP-N-acetylmuramate--L-alanine ligase (458 aa).

118-124 (GTHGKTT) is an ATP binding site.

It belongs to the MurCDEF family.

The protein localises to the cytoplasm. It catalyses the reaction UDP-N-acetyl-alpha-D-muramate + L-alanine + ATP = UDP-N-acetyl-alpha-D-muramoyl-L-alanine + ADP + phosphate + H(+). The protein operates within cell wall biogenesis; peptidoglycan biosynthesis. Cell wall formation. The protein is UDP-N-acetylmuramate--L-alanine ligase of Clostridium acetobutylicum (strain ATCC 824 / DSM 792 / JCM 1419 / IAM 19013 / LMG 5710 / NBRC 13948 / NRRL B-527 / VKM B-1787 / 2291 / W).